The primary structure comprises 492 residues: Aspartyl/glutamyl-tRNA(Asn/Gln) amidotransferase subunit B (492 aa).

The protein belongs to the GatB/GatE family. GatB subfamily. As to quaternary structure, heterotrimer of A, B and C subunits.

The enzyme catalyses L-glutamyl-tRNA(Gln) + L-glutamine + ATP + H2O = L-glutaminyl-tRNA(Gln) + L-glutamate + ADP + phosphate + H(+). It carries out the reaction L-aspartyl-tRNA(Asn) + L-glutamine + ATP + H2O = L-asparaginyl-tRNA(Asn) + L-glutamate + ADP + phosphate + 2 H(+). Allows the formation of correctly charged Asn-tRNA(Asn) or Gln-tRNA(Gln) through the transamidation of misacylated Asp-tRNA(Asn) or Glu-tRNA(Gln) in organisms which lack either or both of asparaginyl-tRNA or glutaminyl-tRNA synthetases. The reaction takes place in the presence of glutamine and ATP through an activated phospho-Asp-tRNA(Asn) or phospho-Glu-tRNA(Gln). This is Aspartyl/glutamyl-tRNA(Asn/Gln) amidotransferase subunit B from Dehalococcoides mccartyi (strain CBDB1).